We begin with the raw amino-acid sequence, 245 residues long: Dof zinc finger protein DOF3.2 (245 aa).

A compositionally biased stretch (polar residues) spans 15 to 26 (SCSTQDYQNQKK). The disordered stretch occupies residues 15-41 (SCSTQDYQNQKKPLSATRPAPPEQSLR). Residues 40 to 94 (LRCPRCDSTNTKFCYYNNYSLSQPRYFCKSCRRYWTKGGILRNIPIGGAYRKHKR) form a Dof-type zinc finger. Cysteine 42, cysteine 45, cysteine 67, and cysteine 70 together coordinate Zn(2+). A disordered region spans residues 91–118 (KHKRSSSATKSLRTTPEPTMTHDGKSFP). The span at 96–108 (SSATKSLRTTPEP) shows a compositional bias: polar residues.

In terms of assembly, interacts with TCP14. As to expression, the PEAR proteins (e.g. DOF2.4, DOF5.1, DOF3.2, DOF1.1, DOF5.6 and DOF5.3) form a short-range concentration gradient that peaks at protophloem sieve elements (PSE).

The protein resides in the nucleus. In terms of biological role, transcription factor that negatively affects seed germination and opposes TCP14 function in the regulation of a specific set of abscisic acid-related genes. The PEAR proteins (e.g. DOF2.4, DOF5.1, DOF3.2, DOF1.1, DOF5.6 and DOF5.3) activate gene expression that promotes radial growth of protophloem sieve elements. This chain is Dof zinc finger protein DOF3.2, found in Arabidopsis thaliana (Mouse-ear cress).